Here is a 198-residue protein sequence, read N- to C-terminus: 7-methyl-GTP pyrophosphatase (198 aa).

The Proton acceptor role is filled by Asp75.

The protein belongs to the Maf family. YceF subfamily. Requires a divalent metal cation as cofactor.

Its subcellular location is the cytoplasm. It catalyses the reaction N(7)-methyl-GTP + H2O = N(7)-methyl-GMP + diphosphate + H(+). Functionally, nucleoside triphosphate pyrophosphatase that hydrolyzes 7-methyl-GTP (m(7)GTP). May have a dual role in cell division arrest and in preventing the incorporation of modified nucleotides into cellular nucleic acids. The chain is 7-methyl-GTP pyrophosphatase from Nitrosospira multiformis (strain ATCC 25196 / NCIMB 11849 / C 71).